The primary structure comprises 425 residues: Enolase (425 aa).

Gln163 contacts (2R)-2-phosphoglycerate. The active-site Proton donor is Glu205. Residues Asp242, Glu286, and Asp313 each coordinate Mg(2+). (2R)-2-phosphoglycerate is bound by residues Lys338, Arg367, Ser368, and Lys389. The Proton acceptor role is filled by Lys338.

This sequence belongs to the enolase family. Requires Mg(2+) as cofactor.

It is found in the cytoplasm. The protein resides in the secreted. It localises to the cell surface. The enzyme catalyses (2R)-2-phosphoglycerate = phosphoenolpyruvate + H2O. It functions in the pathway carbohydrate degradation; glycolysis; pyruvate from D-glyceraldehyde 3-phosphate: step 4/5. Its function is as follows. Catalyzes the reversible conversion of 2-phosphoglycerate (2-PG) into phosphoenolpyruvate (PEP). It is essential for the degradation of carbohydrates via glycolysis. The chain is Enolase from Lactobacillus delbrueckii subsp. bulgaricus (strain ATCC 11842 / DSM 20081 / BCRC 10696 / JCM 1002 / NBRC 13953 / NCIMB 11778 / NCTC 12712 / WDCM 00102 / Lb 14).